The following is a 69-amino-acid chain: Conotoxin Eb6.14 (69 aa).

The N-terminal stretch at 1-17 is a signal peptide; the sequence is VLIIAVLFLTACQLTTA. Residues 18–41 constitute a propeptide that is removed on maturation; it reads ETYSRGRQKHRARRSTDKNSKWTR. Intrachain disulfides connect cysteine 43–cysteine 57, cysteine 50–cysteine 61, and cysteine 56–cysteine 68.

This sequence belongs to the conotoxin O1 superfamily. Expressed by the venom duct.

Its subcellular location is the secreted. This Conus ebraeus (Hebrew cone) protein is Conotoxin Eb6.14 (E1).